Here is a 204-residue protein sequence, read N- to C-terminus: Recombination protein RecR (204 aa).

A C4-type zinc finger spans residues 58-75 (CTICQNITDVGTDPCAIC). Residues 83-181 (TVICVVESPV…AVTKIARGIP (99 aa)) enclose the Toprim domain.

Belongs to the RecR family.

Functionally, may play a role in DNA repair. It seems to be involved in an RecBC-independent recombinational process of DNA repair. It may act with RecF and RecO. The polypeptide is Recombination protein RecR (Chlorobium chlorochromatii (strain CaD3)).